The chain runs to 186 residues: Probable RNA 2'-phosphotransferase (186 aa).

It belongs to the KptA/TPT1 family.

Functionally, removes the 2'-phosphate from RNA via an intermediate in which the phosphate is ADP-ribosylated by NAD followed by a presumed transesterification to release the RNA and generate ADP-ribose 1''-2''-cyclic phosphate (APPR&gt;P). May function as an ADP-ribosylase. In Hahella chejuensis (strain KCTC 2396), this protein is Probable RNA 2'-phosphotransferase.